The primary structure comprises 113 residues: DNA-binding protein Mevan_1162 (113 aa).

Positions Met1–Gln12 are enriched in basic and acidic residues. The disordered stretch occupies residues Met1 to Glu22.

The protein belongs to the PDCD5 family.

This Methanococcus vannielii (strain ATCC 35089 / DSM 1224 / JCM 13029 / OCM 148 / SB) protein is DNA-binding protein Mevan_1162.